The primary structure comprises 378 residues: Erythronate-4-phosphate dehydrogenase (378 aa).

Substrate is bound by residues serine 45 and threonine 66. Residues aspartate 146 and threonine 175 each contribute to the NAD(+) site. The active site involves arginine 208. Aspartate 232 lines the NAD(+) pocket. The active site involves glutamate 237. Histidine 254 serves as the catalytic Proton donor. Glycine 257 provides a ligand contact to NAD(+). Tyrosine 258 lines the substrate pocket.

This sequence belongs to the D-isomer specific 2-hydroxyacid dehydrogenase family. PdxB subfamily. In terms of assembly, homodimer.

The protein resides in the cytoplasm. It catalyses the reaction 4-phospho-D-erythronate + NAD(+) = (R)-3-hydroxy-2-oxo-4-phosphooxybutanoate + NADH + H(+). It participates in cofactor biosynthesis; pyridoxine 5'-phosphate biosynthesis; pyridoxine 5'-phosphate from D-erythrose 4-phosphate: step 2/5. In terms of biological role, catalyzes the oxidation of erythronate-4-phosphate to 3-hydroxy-2-oxo-4-phosphonooxybutanoate. The polypeptide is Erythronate-4-phosphate dehydrogenase (Escherichia coli O45:K1 (strain S88 / ExPEC)).